Here is a 59-residue protein sequence, read N- to C-terminus: Large ribosomal subunit protein bL32 (59 aa).

The disordered stretch occupies residues 1-40; that stretch reads MAVQQNKKSPSKRGMHRSHDFLRTTPLSVDPGTGEVHLRH.

Belongs to the bacterial ribosomal protein bL32 family.

This is Large ribosomal subunit protein bL32 from Nitrosospira multiformis (strain ATCC 25196 / NCIMB 11849 / C 71).